Here is a 62-residue protein sequence, read N- to C-terminus: UPF0291 protein CLI_2672 (62 aa).

Belongs to the UPF0291 family.

The protein localises to the cytoplasm. This is UPF0291 protein CLI_2672 from Clostridium botulinum (strain Langeland / NCTC 10281 / Type F).